Here is a 339-residue protein sequence, read N- to C-terminus: MRVYYDRDADVNLIKSKKVVIVGYGSQGRAHALNLKDSGAANVRVALREGSATVQKAQADGFEVMNVADAAKWADLMMMATPDELQADIYRDHIHNNLRDGAAIAFAHGLNVHCGLIEPKKTVDVVMIAPKGPGHTVRGEYQKGGGVPCLIAIHQDASGNAHDLALSYASGVGGGRSGVIETTFKEECETDLFGEQAVLCGGVVELIRTGFEVLVEAGYAPEMAYFECLNEMKLIVDLIYEGGIANMNYSISNTAEWGEYVTGPRIITAETKAEMKRVLKDIQTGKFTSDWMQEWKAGAARFKGIRRLNDAHQIEEVGGKLRAMMPWIEKNKLVDKARN.

The region spanning 1–182 (MRVYYDRDAD…GGGRSGVIET (182 aa)) is the KARI N-terminal Rossmann domain. NADP(+)-binding positions include 24–27 (YGSQ), Arg48, Ser51, Thr53, and 83–86 (DELQ). Residue His108 is part of the active site. Gly134 contributes to the NADP(+) binding site. The region spanning 183 to 328 (TFKEECETDL…GKLRAMMPWI (146 aa)) is the KARI C-terminal knotted domain. Residues Asp191, Glu195, Glu227, and Glu231 each coordinate Mg(2+). Substrate is bound at residue Ser252.

It belongs to the ketol-acid reductoisomerase family. The cofactor is Mg(2+).

The enzyme catalyses (2R)-2,3-dihydroxy-3-methylbutanoate + NADP(+) = (2S)-2-acetolactate + NADPH + H(+). It carries out the reaction (2R,3R)-2,3-dihydroxy-3-methylpentanoate + NADP(+) = (S)-2-ethyl-2-hydroxy-3-oxobutanoate + NADPH + H(+). It participates in amino-acid biosynthesis; L-isoleucine biosynthesis; L-isoleucine from 2-oxobutanoate: step 2/4. It functions in the pathway amino-acid biosynthesis; L-valine biosynthesis; L-valine from pyruvate: step 2/4. Its function is as follows. Involved in the biosynthesis of branched-chain amino acids (BCAA). Catalyzes an alkyl-migration followed by a ketol-acid reduction of (S)-2-acetolactate (S2AL) to yield (R)-2,3-dihydroxy-isovalerate. In the isomerase reaction, S2AL is rearranged via a Mg-dependent methyl migration to produce 3-hydroxy-3-methyl-2-ketobutyrate (HMKB). In the reductase reaction, this 2-ketoacid undergoes a metal-dependent reduction by NADPH to yield (R)-2,3-dihydroxy-isovalerate. The protein is Ketol-acid reductoisomerase (NADP(+)) of Brucella abortus (strain S19).